The sequence spans 438 residues: Putative phospholipase A2 (438 aa).

The active-site Nucleophile is the Ser257. Catalysis depends on charge relay system residues Asp291 and His368.

The protein belongs to the serine esterase family.

Its subcellular location is the cytoplasm. The protein resides in the nucleus. It carries out the reaction a 1-O-alkyl-2-acetyl-sn-glycero-3-phosphocholine + H2O = a 1-O-alkyl-sn-glycero-3-phosphocholine + acetate + H(+). This chain is Putative phospholipase A2, found in Schizosaccharomyces pombe (strain 972 / ATCC 24843) (Fission yeast).